Reading from the N-terminus, the 517-residue chain is Meiosis-specific transcription factor mei4 (517 aa).

A DNA-binding region (fork-head) is located at residues 81 to 172 (KPPCSYATLI…QNFVSVRLHR (92 aa)). Residues 170–278 (LHRSHSTDSN…PNAETQEDLP (109 aa)) form a disordered region. A compositionally biased stretch (low complexity) spans 209-223 (NSFNSSTSTSGSSSN). A compositionally biased stretch (polar residues) spans 230-246 (NDASQPSNQDSSLNSNI). Over residues 254–270 (SNVQSNSSSSENVPKPN) the composition is skewed to low complexity.

Its subcellular location is the nucleus. Functionally, functions as a meiosis-specific transcription factor. Binds to the 5'-GTAAAYA-3' consensus sequence of the promoter of the spo6 gene. The protein is Meiosis-specific transcription factor mei4 (mei4) of Schizosaccharomyces pombe (strain 972 / ATCC 24843) (Fission yeast).